A 151-amino-acid polypeptide reads, in one-letter code: Large ribosomal subunit protein bL9 (151 aa).

The protein belongs to the bacterial ribosomal protein bL9 family.

Functionally, binds to the 23S rRNA. This is Large ribosomal subunit protein bL9 from Lactobacillus delbrueckii subsp. bulgaricus (strain ATCC BAA-365 / Lb-18).